Here is a 592-residue protein sequence, read N- to C-terminus: Bifunctional enzyme BirA/CoaX (592 aa).

The tract at residues 1-329 is biotin--protein ligase; it reads MTVLKLSHWR…ISLRSDDRPV (329 aa). The BPL/LPL catalytic domain occupies 83–259; sequence QTALKHECAS…ELDAVLLQYA (177 aa). The tract at residues 336–592 is type III pantothenate kinase; that stretch reads DSERFLLLDG…AAEGREYEHI (257 aa). An ATP-binding site is contributed by 344-351; the sequence is DGGNSRLK. Substrate-binding positions include Y426 and 433 to 436; that span reads GSDR. Catalysis depends on D435, which acts as the Proton acceptor. T458 contributes to the ATP binding site. T508 is a binding site for substrate.

This sequence in the N-terminal section; belongs to the biotin--protein ligase family. It in the C-terminal section; belongs to the type III pantothenate kinase family. NH4(+) is required as a cofactor. The cofactor is K(+).

Its subcellular location is the cytoplasm. The enzyme catalyses biotin + L-lysyl-[protein] + ATP = N(6)-biotinyl-L-lysyl-[protein] + AMP + diphosphate + H(+). It carries out the reaction (R)-pantothenate + ATP = (R)-4'-phosphopantothenate + ADP + H(+). The protein operates within cofactor biosynthesis; coenzyme A biosynthesis; CoA from (R)-pantothenate: step 1/5. Its function is as follows. Activates biotin to form biotinyl-5'-adenylate and transfers the biotin moiety to biotin-accepting proteins. Functionally, catalyzes the phosphorylation of pantothenate (Pan), the first step in CoA biosynthesis. The sequence is that of Bifunctional enzyme BirA/CoaX (birA/coaX) from Neisseria meningitidis serogroup B (strain ATCC BAA-335 / MC58).